The primary structure comprises 380 residues: Flap endonuclease 1 (380 aa).

Positions 1 to 105 (MGIKGLAQVL…GELAKRVARH (105 aa)) are N-domain. Aspartate 34 is a binding site for Mg(2+). DNA contacts are provided by arginine 47 and arginine 71. 5 residues coordinate Mg(2+): aspartate 87, glutamate 159, glutamate 161, aspartate 180, and aspartate 182. Positions 123–254 (MVDRFAKRTV…ARAVELIRQY (132 aa)) are I-domain. DNA is bound at residue glutamate 159. DNA-binding residues include glycine 232 and aspartate 234. Aspartate 234 serves as a coordination point for Mg(2+). The interval 337–345 (PQGRLDSFF) is interaction with PCNA. Positions 340–380 (RLDSFFKPVPSSPKKPVDTKSKGSAKRKRDSNKGGESKKKR) are disordered. Over residues 342 to 353 (DSFFKPVPSSPK) the composition is skewed to low complexity. 2 positions are modified to phosphoserine: serine 350 and serine 351. A compositionally biased stretch (basic and acidic residues) spans 370 to 380 (SNKGGESKKKR).

It belongs to the XPG/RAD2 endonuclease family. FEN1 subfamily. Interacts with PCNA. Three molecules of rad2 bind to one PCNA trimer with each molecule binding to one PCNA monomer. PCNA stimulates the nuclease activity without altering cleavage specificity. Mg(2+) is required as a cofactor. In terms of processing, phosphorylated. Phosphorylation upon DNA damage induces relocalization to the nuclear plasma.

The protein resides in the nucleus. The protein localises to the nucleolus. It is found in the nucleoplasm. It localises to the mitochondrion. Structure-specific nuclease with 5'-flap endonuclease and 5'-3' exonuclease activities involved in DNA replication and repair. During DNA replication, cleaves the 5'-overhanging flap structure that is generated by displacement synthesis when DNA polymerase encounters the 5'-end of a downstream Okazaki fragment. It enters the flap from the 5'-end and then tracks to cleave the flap base, leaving a nick for ligation. Also involved in the long patch base excision repair (LP-BER) pathway, by cleaving within the apurinic/apyrimidinic (AP) site-terminated flap. Acts as a genome stabilization factor that prevents flaps from equilibrating into structures that lead to duplications and deletions. Also possesses 5'-3' exonuclease activity on nicked or gapped double-stranded DNA, and exhibits RNase H activity. Also involved in replication and repair of rDNA and in repairing mitochondrial DNA. This is Flap endonuclease 1 from Schizosaccharomyces pombe (strain 972 / ATCC 24843) (Fission yeast).